We begin with the raw amino-acid sequence, 619 residues long: Very-long-chain aldehyde decarbonylase GL1-4 (619 aa).

5 helical membrane-spanning segments follow: residues 45–65 (IAFSLILPSLLLRMIHNQIWI), 94–114 (GWDDQILFNGLVFYAGYLAMP), 126–146 (GAVVTALVHTGPVEFLYYWFH), 178–198 (FAEHVVYFILFAIPILSTIYL), and 325–345 (AWYMWTLWPLAWLSMVLAWIY). The 135-residue stretch at 138–272 (VEFLYYWFHR…MPFYDYIYNT (135 aa)) folds into the Fatty acid hydroxylase domain.

The protein belongs to the sterol desaturase family. In terms of assembly, homodimer. Expressed ubiquitously at low levels, with higher accumulation in developing panicles, shoots and flag leaves.

Its subcellular location is the endoplasmic reticulum membrane. It carries out the reaction a long-chain fatty aldehyde + 2 NADPH + O2 + H(+) = a long-chain alkane + formate + 2 NADP(+) + H2O. Its function is as follows. Aldehyde decarbonylase involved in the conversion of aldehydes to alkanes. Core component of a very-long-chain alkane synthesis complex. The protein is Very-long-chain aldehyde decarbonylase GL1-4 of Oryza sativa subsp. japonica (Rice).